A 181-amino-acid chain; its full sequence is MGRTLENKKEIVADLKETLGESTLALVIEYQGLTVAEISDLRRRLRPSGTVCKVTKNTLMGIAIQDDEKWQPLSELLKGSSAFLLVKEDFSSAIKAYQDFQKVTKKTELRGGVMEGRLLKEPDVKALGDLPSKEQLMGQIAGAINALATKIAVGINEVPGGLARALQAVADKENGGDDSAA.

It belongs to the universal ribosomal protein uL10 family. As to quaternary structure, part of the ribosomal stalk of the 50S ribosomal subunit. The N-terminus interacts with L11 and the large rRNA to form the base of the stalk. The C-terminus forms an elongated spine to which L12 dimers bind in a sequential fashion forming a multimeric L10(L12)X complex.

Functionally, forms part of the ribosomal stalk, playing a central role in the interaction of the ribosome with GTP-bound translation factors. The sequence is that of Large ribosomal subunit protein uL10 from Trichormus variabilis (strain ATCC 29413 / PCC 7937) (Anabaena variabilis).